The following is a 324-amino-acid chain: MTINPDDLCRRIMADPEACATEDEALRLLELPAEQTLPLIACAQRIRTAHAGPAFTCAIVNARSGRCPENCSFCAQSAHYATGAPEHPMLNTAALVEHALKLADAGADRFGIVTSGTRPAPRELETVCEAVVRIRARTHLSPCASLGQLSPQAAAMLRQAGLERYHHNLETARSFFASVCTTHDYDEDIYTVKLAREAGLAVCCGGILGLGESRAQRAELSGQIKRCRADSVPVNLLTPVAGTPLERMDPLPPFEALRTIAVFRFMHPQADILVAGGREHVLGEYRSWTFISGANGLMVGNYLTTAGRSTADDYTMLRHMGVLR.

Positions 50-278 (HAGPAFTCAI…QADILVAGGR (229 aa)) constitute a Radical SAM core domain. [4Fe-4S] cluster is bound by residues cysteine 67, cysteine 71, and cysteine 74. Positions 143 and 203 each coordinate [2Fe-2S] cluster.

It belongs to the radical SAM superfamily. Biotin synthase family. In terms of assembly, homodimer. [4Fe-4S] cluster serves as cofactor. The cofactor is [2Fe-2S] cluster.

The enzyme catalyses (4R,5S)-dethiobiotin + (sulfur carrier)-SH + 2 reduced [2Fe-2S]-[ferredoxin] + 2 S-adenosyl-L-methionine = (sulfur carrier)-H + biotin + 2 5'-deoxyadenosine + 2 L-methionine + 2 oxidized [2Fe-2S]-[ferredoxin]. Its pathway is cofactor biosynthesis; biotin biosynthesis; biotin from 7,8-diaminononanoate: step 2/2. Catalyzes the conversion of dethiobiotin (DTB) to biotin by the insertion of a sulfur atom into dethiobiotin via a radical-based mechanism. This chain is Biotin synthase, found in Oleidesulfovibrio alaskensis (strain ATCC BAA-1058 / DSM 17464 / G20) (Desulfovibrio alaskensis).